A 265-amino-acid polypeptide reads, in one-letter code: Protein B8 (265 aa).

This Homo sapiens (Human) protein is Protein B8 (B8).